Reading from the N-terminus, the 823-residue chain is MGFGSDLKNSQEAVLKLQDWELRLLETVKKFMALRIKSDKEYAYTLQNLCNQVDKESTVQVNYVSNVSKSWLLMIQQTEQLSRIMKTHAEDLNSGPLHRLTMMIKDKQQVKKSYVGIHQQIEAEMIKVTKTELEKLKSSYRQLIKEMNSAKEKYKEALAKGKETEKAKERYDKATMKLHMLHNQYVLALKGAQLHQSQYYDTTLPLLLDSVQKMQEEMIKALKGIFDDYSQITSLVTEEIVNVHKEIQMSVEQIDPSTEYNNFIDVHRTTAAKEQEIEFDTSLLEENENLQANEIMWNNLTADSLQVMLKTLAEELTQTQQMLLHKEAAVLELEKRIEESFETCEKKSDIVLLLGQKQALEELKQSVQQLRCTEAKCAAQKALLEQKVQENDGKEPPPVVNYEEDARSVTSMERKERLSKFESIRHSIAGIIKSPKSVLGSSTQVCDVISVGERPLAEHDWYHGAIPRIEAQELLKQQGDFLVRESHGKPGEYVLSVYSDGQRRHFIIQFVDNLYRFEGTGFSNIPQLIDHHFNTKQVITKKSGVVLLNPIPKDKKWVLNHEDVSLGELLGKGNFGEVYKGTLKDKTPVAIKTCKEDLPQELKIKFLQEAKILKQYDHPNIVKLIGVCTQRQPVYIIMELVPGGDFLTFLRKRKDELKLKQLVRFSLDVAAGMLYLESKNCIHRDLAARNCLVGENNTLKISDFGMSRQEDGGVYSSSGLKQIPIKWTAPEALNYGRYSSESDVWSFGILLWETFSLGVCPYPGMTNQQAREQVERGYRMSAPQNCPEEVFTIMMKCWDYKPENRPKFNDLHKELTVIKKMIT.

The region spanning 1–259 (MGFGSDLKNS…SVEQIDPSTE (259 aa)) is the F-BAR domain. Residues 1–300 (MGFGSDLKNS…QANEIMWNNL (300 aa)) are important for interaction with membranes containing phosphoinositides. Coiled coils occupy residues 123-185 (AEMI…HNQY) and 301-381 (TADS…AAQK). Residues 389–408 (QENDGKEPPPVVNYEEDARS) are disordered. At tyrosine 402 the chain carries Phosphotyrosine. Serine 434 is subject to Phosphoserine. The 91-residue stretch at 461–551 (WYHGAIPRIE…KSGVVLLNPI (91 aa)) folds into the SH2 domain. A Protein kinase domain is found at 564 to 817 (VSLGELLGKG…FNDLHKELTV (254 aa)). Residues 570–578 (LGKGNFGEV) and lysine 592 each bind ATP. Tyrosine 616 bears the Phosphotyrosine; by autocatalysis mark. The active-site Proton acceptor is aspartate 685. Tyrosine 715 bears the Phosphotyrosine; by autocatalysis mark.

It belongs to the protein kinase superfamily. Tyr protein kinase family. Fes/fps subfamily. Homotrimer. Isoform 4 is a monomer, due to the absence of the N-terminal coiled coil domains. Interacts with CTNND1, EGFR, FLT3, PECAM1 and PDGFR. Interacts (via SH2 domain) with CTTN. Component of a complex that contains at least FER, CTTN and PTK2/FAK1. Interacts with IRS1 and PIK3R1. Interacts with STAT3. Interacts with PPP1CA and regulates its phosphorylation at 'Thr-320'. Interacts with JAK1. Interacts with HSP90; this stabilizes phosphorylated FER and protects FER against proteasomal degradation. Interacts with ARHGDIA, NRP1, PLEC and TMF1. In terms of processing, autophosphorylated. Polyubiquitinated; this leads to proteasomal degradation. As to expression, detected in liver and testis. Isoform 4 is detected only in testis (at protein level). Widely expressed.

The protein resides in the cytoplasm. Its subcellular location is the cytoskeleton. It is found in the cell membrane. The protein localises to the cell projection. It localises to the cell junction. The protein resides in the membrane. Its subcellular location is the nucleus. It is found in the cell cortex. It carries out the reaction L-tyrosyl-[protein] + ATP = O-phospho-L-tyrosyl-[protein] + ADP + H(+). Activated by phosphatidic acid binding. Activated by hydrogen peroxide (in vitro). Activated by reactive oxygen species (ROS). In terms of biological role, tyrosine-protein kinase that acts downstream of cell surface receptors for growth factors and plays a role in the regulation of the actin cytoskeleton, microtubule assembly, lamellipodia formation, cell adhesion, cell migration and chemotaxis. Acts downstream of EGFR, KIT, PDGFRA and PDGFRB. Acts downstream of EGFR to promote activation of NF-kappa-B and cell proliferation. May play a role in the regulation of the mitotic cell cycle. Plays a role in the insulin receptor signaling pathway and in activation of phosphatidylinositol 3-kinase. Acts downstream of the activated FCER1 receptor and plays a role in FCER1 (high affinity immunoglobulin epsilon receptor)-mediated signaling in mast cells. Plays a role in the regulation of mast cell degranulation. Plays a role in leukocyte recruitment and diapedesis in response to bacterial lipopolysaccharide (LPS). Phosphorylates CTTN, CTNND1, PTK2/FAK1, GAB1, PECAM1 and PTPN11. May phosphorylate JUP and PTPN1. Can phosphorylate STAT3 according to PubMed:10878010 and PubMed:19159681, but clearly plays a redundant role in STAT3 phosphorylation. According to PubMed:11134346, cells where wild type FER has been replaced by a kinase-dead mutant show no reduction in STAT3 phosphorylation. Phosphorylates TMF1. Isoform 3 lacks kinase activity. This is Tyrosine-protein kinase Fer (Fer) from Mus musculus (Mouse).